An 890-amino-acid chain; its full sequence is MPSLNDIRSTFLNYFAKQGHTIVPSSPLVPRNDPTLMFTNSGMVQFKNCFTGVDKRDYVRATTAQKCVRAGGKHNDLDNVGYTARHHTFFEMLGNFSFGDYFKSEAIPFAWELITRDFDIPKDRLYTTVYHTDDEAFEIWKKVGVPESRIIRIATSDNFWQMGPTGPCGPCTEIFYDHGDHIWGGPPGSPEEDGDRFIEIWNIVFMQNEKFEDGSMVDLDMQSIDTGMGLERIGALLQGSHDNYDTDLFKALIEASADATSVDPYGDQNVHHRVIADHLRSTSFLIADGVMPSNDGRGYVLRRIMRRAMRHAHLLGAKDPVMHRLVRTLVGQMGAAYPELGRAQALIEETLLLEETRFKQTLDRGLKLLDDELTALPEEAPLPGEAAFKLYDTYGFPLDLTQDALREKGRKVDTDGFDAAMAEQKAKARAAWAGSGESTDNAIWFDVLDVAGATDFLGYDTEKAEGQALALVVDGALSDRIAEGGSGWVVTNQTPFYGESGGQVGDTGVIRRLENRDHVALVEDSRKFADGKVYAHKVTMERGALAKGDAVELEVDHARRSAIRANHSATHLLHEALREALGDHVAQRGSLNAADRLRFDFSHAKALTEAELAQVGAEVNRFIRQNSRVETRIMTPDDARAIGAQALFGEKYGDEVRVVSMGRAETGKGADGKTWSIELCGGTHVAQTGDIGMFVLLGDSASSAGVRRIEALTGQAAFDHLSQEGARLSQVTAMLKAQPAEVAERVRALMDERKALQNEVAQLRRDLAMAGGAGQGGGAETHEVGGVPFLAQVLSGVSGKDLPALIDEHKSRMGSGAVLLIADAGGKAAVAAGVTEDLTARVSAVDLVKAAVAALGGKGGGGRPDMAQGGGQDAGKADAAIKAAEQVLGG.

The Zn(2+) site is built by H567, H571, C680, and H684.

It belongs to the class-II aminoacyl-tRNA synthetase family. Zn(2+) is required as a cofactor.

It is found in the cytoplasm. The enzyme catalyses tRNA(Ala) + L-alanine + ATP = L-alanyl-tRNA(Ala) + AMP + diphosphate. In terms of biological role, catalyzes the attachment of alanine to tRNA(Ala) in a two-step reaction: alanine is first activated by ATP to form Ala-AMP and then transferred to the acceptor end of tRNA(Ala). Also edits incorrectly charged Ser-tRNA(Ala) and Gly-tRNA(Ala) via its editing domain. In Ruegeria pomeroyi (strain ATCC 700808 / DSM 15171 / DSS-3) (Silicibacter pomeroyi), this protein is Alanine--tRNA ligase.